Here is a 576-residue protein sequence, read N- to C-terminus: Adenine deaminase (576 aa).

This sequence belongs to the metallo-dependent hydrolases superfamily. Adenine deaminase family. The cofactor is Mn(2+).

The enzyme catalyses adenine + H2O + H(+) = hypoxanthine + NH4(+). The protein is Adenine deaminase of Bacillus pumilus (strain SAFR-032).